We begin with the raw amino-acid sequence, 195 residues long: CASP-like protein 1B1 (195 aa).

At 1 to 25 (MDLEKGKKPSEQAAACRIMQVKDKL) the chain is on the cytoplasmic side. Residues 26–46 (ITLQPVVRACVFLATAVAAVI) form a helical membrane-spanning segment. The Extracellular portion of the chain corresponds to 47-78 (MGLNKQSYTTVVAIVGTRPVTQTFTAKFKDTP). The chain crosses the membrane as a helical span at residues 79–99 (AFVFFVIANAIASGYNLMVLV). At 100-114 (TRRILQRRAQSLSVH) the chain is on the cytoplasmic side. The chain crosses the membrane as a helical span at residues 115 to 135 (LLDMVILTLLATGSATAASMA). At 136-160 (QLGKNGNLHARWNPICDKFGSFCNH) the chain is on the extracellular side. A helical transmembrane segment spans residues 161 to 181 (GGIALMSSFIGVALMLALNLL). The Cytoplasmic segment spans residues 182-195 (SAAANSPRSNVTGQ).

It belongs to the Casparian strip membrane proteins (CASP) family. Homodimer and heterodimers.

The protein resides in the cell membrane. This chain is CASP-like protein 1B1, found in Oryza sativa subsp. indica (Rice).